A 428-amino-acid chain; its full sequence is Serine--tRNA ligase (428 aa).

231–233 (TAE) contacts L-serine. 262–264 (RSE) serves as a coordination point for ATP. Glu-285 contributes to the L-serine binding site. Residue 349–352 (EISS) participates in ATP binding. An L-serine-binding site is contributed by Ser-385.

It belongs to the class-II aminoacyl-tRNA synthetase family. Type-1 seryl-tRNA synthetase subfamily. In terms of assembly, homodimer. The tRNA molecule binds across the dimer.

Its subcellular location is the cytoplasm. It catalyses the reaction tRNA(Ser) + L-serine + ATP = L-seryl-tRNA(Ser) + AMP + diphosphate + H(+). The catalysed reaction is tRNA(Sec) + L-serine + ATP = L-seryl-tRNA(Sec) + AMP + diphosphate + H(+). It functions in the pathway aminoacyl-tRNA biosynthesis; selenocysteinyl-tRNA(Sec) biosynthesis; L-seryl-tRNA(Sec) from L-serine and tRNA(Sec): step 1/1. Catalyzes the attachment of serine to tRNA(Ser). Is also able to aminoacylate tRNA(Sec) with serine, to form the misacylated tRNA L-seryl-tRNA(Sec), which will be further converted into selenocysteinyl-tRNA(Sec). This Staphylococcus aureus (strain Mu3 / ATCC 700698) protein is Serine--tRNA ligase.